The following is a 219-amino-acid chain: DnaJ homolog subfamily C member 30, mitochondrial (219 aa).

The N-terminal 38 residues, 1 to 38 (MAAARCLGWTLSPLWRWWQVRGLPPSSATGLCSRGRTY), are a transit peptide targeting the mitochondrion. Positions 42–107 (ALYELLGVPS…ILRRKYDRGL (66 aa)) constitute a J domain. The tract at residues 109-148 (SDQDLRGPGVKPSKTPVADPAPPRPPPYTPRAPGGSRASP) is disordered. A compositionally biased stretch (pro residues) spans 127–138 (DPAPPRPPPYTP). Residues 202-218 (ATFFVVLFLIFVFVGFR) traverse the membrane as a helical segment.

Associates with the ATP synthase complex. Interacts with MT-ATP6; interaction is direct. Interacts with ATP5MC2; interaction is direct. In terms of tissue distribution, in brain, expressed in gray matter structures.

It is found in the mitochondrion inner membrane. Mitochondrial protein enriched in neurons that acts as a regulator of mitochondrial respiration. Associates with the ATP synthase complex and facilitates ATP synthesis. May be a chaperone protein involved in the turnover of the subunits of mitochondrial complex I N-module. It facilitates the degradation of N-module subunits damaged by oxidative stress, and contributes to complex I functional efficiency. This chain is DnaJ homolog subfamily C member 30, mitochondrial, found in Mus musculus (Mouse).